We begin with the raw amino-acid sequence, 602 residues long: UvrABC system protein C (602 aa).

Residues 15–92 (DLPGSYQMKD…IQKYQPYYNI (78 aa)) form the GIY-YIG domain. The UVR domain occupies 197-232 (GKAKASLTAKMERAAKNLQFERAAEIRDQLHYIEQT).

This sequence belongs to the UvrC family. Interacts with UvrB in an incision complex.

It localises to the cytoplasm. Its function is as follows. The UvrABC repair system catalyzes the recognition and processing of DNA lesions. UvrC both incises the 5' and 3' sides of the lesion. The N-terminal half is responsible for the 3' incision and the C-terminal half is responsible for the 5' incision. The polypeptide is UvrABC system protein C (Lacticaseibacillus casei (strain BL23) (Lactobacillus casei)).